Consider the following 272-residue polypeptide: Acetylglutamate kinase (272 aa).

Substrate is bound by residues 46–47 (GA), Arg-68, and Asn-166.

This sequence belongs to the acetylglutamate kinase family. ArgB subfamily.

The protein localises to the cytoplasm. The enzyme catalyses N-acetyl-L-glutamate + ATP = N-acetyl-L-glutamyl 5-phosphate + ADP. It participates in amino-acid biosynthesis; L-arginine biosynthesis; N(2)-acetyl-L-ornithine from L-glutamate: step 2/4. Its function is as follows. Catalyzes the ATP-dependent phosphorylation of N-acetyl-L-glutamate. This Dehalococcoides mccartyi (strain ATCC BAA-2100 / JCM 16839 / KCTC 5957 / BAV1) protein is Acetylglutamate kinase.